Reading from the N-terminus, the 445-residue chain is Nuclear hormone receptor family member nhr-1 (445 aa).

The interval 19 to 55 (PMVNSQRNEDPSMYMNGSAASVSHTNGSSSMGNDQKF) is disordered. The segment covering 36 to 51 (SAASVSHTNGSSSMGN) has biased composition (polar residues). The segment at residues 70–145 (GELCAVCSDL…VGMDAKALQI (76 aa)) is a DNA-binding region (nuclear receptor). 2 consecutive NR C4-type zinc fingers follow at residues 73–93 (CAVCSDLATGYHYGVASCNGC) and 109–133 (CQYNGNCDVNKNIRCACRHCRFNKC). Residues 179 to 444 (QDQEIIDQLT…PFVKELCMKR (266 aa)) enclose the NR LBD domain.

Belongs to the nuclear hormone receptor family.

The protein localises to the nucleus. Functionally, orphan nuclear receptor which acts in concert with the insulin/IGF-1-like signaling (IIS) pathway during osmotic stress, perhaps in response to a ligand modified by the sulfotransferase ssu-1. In Caenorhabditis elegans, this protein is Nuclear hormone receptor family member nhr-1 (nhr-1).